A 380-amino-acid polypeptide reads, in one-letter code: Tomoregulin-1 (380 aa).

A signal peptide spans 1-39; sequence MGAAAAEAPLRLPAAPPLAFCCYTSVLLLFAFSLPGSRA. The Extracellular segment spans residues 40–330; sequence SNQPPGGGGG…VPSRQKLTHV (291 aa). 2 consecutive Kazal-like domains span residues 98 to 145 and 189 to 237; these read ACQF…PCYS and VCNI…HCTD. Cystine bridges form between C99/C129, C103/C122, C111/C143, C190/C221, C194/C214, C203/C235, C275/C288, C283/C299, and C301/C310. Positions 271–311 constitute an EGF-like domain; sequence NHMPCPENLNGYCIHGKCEFIYSTQKASCRCESGYTGQHCE. A helical membrane pass occupies residues 331-351; it reads LIAAIIGAVQIAIIVAIVMCI. Over 352–380 the chain is Cytoplasmic; sequence TRKCPKNNRGRRQKQNLGHFTSDTSSRMV. Residues 359 to 380 form a disordered region; sequence NRGRRQKQNLGHFTSDTSSRMV. A compositionally biased stretch (polar residues) spans 366-380; that stretch reads QNLGHFTSDTSSRMV.

The protein belongs to the tomoregulin family. May interact with ST14. Expressed predominantly in brain, and at lower levels in heart, placenta and skeletal muscle. Down-regulated in brain tumors as compared to control brain tissues.

Its subcellular location is the cell membrane. In terms of biological role, neuron-specific restriction factor that prevents herpes simplex virus 1 (HHV-1) infection in the brain by blocking viral entry. Also able to restrict herpes simplex virus 2 (HHV-2) infection, although to a lesser extent. Acts by preventing the association between the viral glycoprotein D (gD) and its cell surface receptor NECTIN1, thereby inhibiting fusion of the virus and the cell membrane. Also able to prevent the association between the viral glycoprotein B (gB) and MYH9/NMMHC-IIA and MYH10/NMMHC-IIB receptors. May be a tumor suppressor in brain cancers. The protein is Tomoregulin-1 of Homo sapiens (Human).